The sequence spans 501 residues: Probable sucrose utilization protein SUC1 (501 aa).

The segment at residues 13–39 (CDSCSFRKVKCDMKTPCSRCVLNNLKC) is a DNA-binding region (zn(2)-C6 fungal-type).

The protein belongs to the MAL13 family.

The protein resides in the nucleus. Its function is as follows. Affects sucrose utilization and alpha-glucosidase activity. Probable transcriptional activator. In Candida albicans (strain SC5314 / ATCC MYA-2876) (Yeast), this protein is Probable sucrose utilization protein SUC1 (SUC1).